A 181-amino-acid polypeptide reads, in one-letter code: UPF0302 protein LMOf2365_1950 (181 aa).

The protein belongs to the UPF0302 family.

This Listeria monocytogenes serotype 4b (strain F2365) protein is UPF0302 protein LMOf2365_1950.